The chain runs to 222 residues: Millepora cytotoxin-1 (222 aa).

An N-terminal signal peptide occupies residues 1 to 20 (MVTLYLHVPILLLVVITARA). Residues 21 to 75 (APKPDTHNPFDELSSVAEKQDLHYGDRSRKDPFIAQNDVGNNFRDGTQENLTKVR) constitute a propeptide that is removed on maturation. 3 disulfide bridges follow: cysteine 89–cysteine 115, cysteine 142–cysteine 168, and cysteine 179–cysteine 222. 3 repeats span residues 100–109 (SIHDNHYEDR), 153–162 (SIHDNYYEDR), and 206–215 (SQHNNYYEDR).

The protein belongs to the dermatopontin family. In terms of processing, is not glycosylated.

The protein localises to the secreted. Its subcellular location is the nematocyst. Is potently cytotoxic (EC(50) value 79 ng/mL) towards L1210 mouse leukemia cells, has hemagglutination activity on sheep erythrocytes, and is lethal in crayfish. Has no phospholipase A2 activity. This is Millepora cytotoxin-1 from Millepora dichotoma (Net fire coral).